Here is a 195-residue protein sequence, read N- to C-terminus: Imidazoleglycerol-phosphate dehydratase (195 aa).

It belongs to the imidazoleglycerol-phosphate dehydratase family.

Its subcellular location is the cytoplasm. It carries out the reaction D-erythro-1-(imidazol-4-yl)glycerol 3-phosphate = 3-(imidazol-4-yl)-2-oxopropyl phosphate + H2O. The protein operates within amino-acid biosynthesis; L-histidine biosynthesis; L-histidine from 5-phospho-alpha-D-ribose 1-diphosphate: step 6/9. The chain is Imidazoleglycerol-phosphate dehydratase from Cupriavidus metallidurans (strain ATCC 43123 / DSM 2839 / NBRC 102507 / CH34) (Ralstonia metallidurans).